A 449-amino-acid chain; its full sequence is Asparagine--tRNA ligase (449 aa).

The protein belongs to the class-II aminoacyl-tRNA synthetase family. As to quaternary structure, homodimer.

The protein localises to the cytoplasm. The catalysed reaction is tRNA(Asn) + L-asparagine + ATP = L-asparaginyl-tRNA(Asn) + AMP + diphosphate + H(+). This Mesomycoplasma hyopneumoniae (strain 232) (Mycoplasma hyopneumoniae) protein is Asparagine--tRNA ligase.